A 162-amino-acid chain; its full sequence is Phosphopantetheine adenylyltransferase (162 aa).

T10 is a binding site for substrate. Residues 10–11 (TF) and H18 contribute to the ATP site. The substrate site is built by K42, L74, and R88. Residues 89 to 91 (GLR), E99, and 124 to 130 (FSCISST) contribute to the ATP site.

The protein belongs to the bacterial CoaD family. In terms of assembly, homohexamer. The cofactor is Mg(2+).

Its subcellular location is the cytoplasm. The enzyme catalyses (R)-4'-phosphopantetheine + ATP + H(+) = 3'-dephospho-CoA + diphosphate. The protein operates within cofactor biosynthesis; coenzyme A biosynthesis; CoA from (R)-pantothenate: step 4/5. Functionally, reversibly transfers an adenylyl group from ATP to 4'-phosphopantetheine, yielding dephospho-CoA (dPCoA) and pyrophosphate. The chain is Phosphopantetheine adenylyltransferase from Francisella tularensis subsp. mediasiatica (strain FSC147).